A 296-amino-acid polypeptide reads, in one-letter code: Cutinase est1 (296 aa).

An N-terminal signal peptide occupies residues 1 to 35 (MSVTTPRREASLLSRAVAVAAAAAATVALAAPAQA). A disordered region spans residues 36-57 (ANPYERGPNPTESMLEARSGPF). A poly(ethylene terephthalate)-binding site is contributed by Tyr-95. Ser-165 serves as the catalytic Nucleophile. Residues Met-166 and Trp-190 each contribute to the poly(ethylene terephthalate) site. Residues Asp-211 and His-243 each act as charge relay system in the active site. A disulfide bridge connects residues Cys-276 and Cys-294.

Belongs to the AB hydrolase superfamily. As to quaternary structure, monomer.

The protein resides in the secreted. It is found in the periplasm. It carries out the reaction (ethylene terephthalate)(n) + H2O = (ethylene terephthalate)(n-1) + 4-[(2-hydroxyethoxy)carbonyl]benzoate + H(+). The catalysed reaction is a butanoate ester + H2O = an aliphatic alcohol + butanoate + H(+). It catalyses the reaction cutin + H2O = cutin monomers.. Functionally, catalyzes the hydrolysis of cutin, a polyester that forms the structure of plant cuticle. Shows esterase activity towards p-nitrophenol-linked aliphatic esters (pNP-aliphatic esters). Capable of degrading the plastic poly(ethylene terephthalate) (PET), the most abundant polyester plastic in the world. Can also depolymerize the synthetic polyester poly(epsilon-caprolactone) (PCL). This is Cutinase est1 from Thermobifida alba (Thermomonospora alba).